The following is a 199-amino-acid chain: UPF0301 protein Rfer_1377 (199 aa).

It belongs to the UPF0301 (AlgH) family.

This Albidiferax ferrireducens (strain ATCC BAA-621 / DSM 15236 / T118) (Rhodoferax ferrireducens) protein is UPF0301 protein Rfer_1377.